The sequence spans 807 residues: Glycerol-3-phosphate acyltransferase (807 aa).

The HXXXXD motif signature appears at 309–314; the sequence is CHRSHM.

The protein belongs to the GPAT/DAPAT family.

Its subcellular location is the cell inner membrane. The catalysed reaction is sn-glycerol 3-phosphate + an acyl-CoA = a 1-acyl-sn-glycero-3-phosphate + CoA. It participates in phospholipid metabolism; CDP-diacylglycerol biosynthesis; CDP-diacylglycerol from sn-glycerol 3-phosphate: step 1/3. The chain is Glycerol-3-phosphate acyltransferase from Aeromonas hydrophila subsp. hydrophila (strain ATCC 7966 / DSM 30187 / BCRC 13018 / CCUG 14551 / JCM 1027 / KCTC 2358 / NCIMB 9240 / NCTC 8049).